A 267-amino-acid polypeptide reads, in one-letter code: Small ribosomal subunit protein uS2 (267 aa).

Positions 237-267 (IGESAAAPSEPALETASAEATAEGEQPGSQA) are disordered. Positions 238–261 (GESAAAPSEPALETASAEATAEGE) are enriched in low complexity.

This sequence belongs to the universal ribosomal protein uS2 family.

This chain is Small ribosomal subunit protein uS2, found in Chelativorans sp. (strain BNC1).